The primary structure comprises 467 residues: UDP-N-acetylmuramate--L-alanine ligase (467 aa).

Residue 112-118 coordinates ATP; the sequence is GTHGKTT.

This sequence belongs to the MurCDEF family.

Its subcellular location is the cytoplasm. It catalyses the reaction UDP-N-acetyl-alpha-D-muramate + L-alanine + ATP = UDP-N-acetyl-alpha-D-muramoyl-L-alanine + ADP + phosphate + H(+). The protein operates within cell wall biogenesis; peptidoglycan biosynthesis. In terms of biological role, cell wall formation. The protein is UDP-N-acetylmuramate--L-alanine ligase of Azoarcus sp. (strain BH72).